The sequence spans 500 residues: Anthranilate synthase component 1 (500 aa).

L-tryptophan contacts are provided by residues S49 and 276–278 (PFM). 311–312 (GT) serves as a coordination point for chorismate. E338 is a binding site for Mg(2+). Residues Y426, R446, 460–462 (GGG), and G462 contribute to the chorismate site. Position 475 (E475) interacts with Mg(2+).

This sequence belongs to the anthranilate synthase component I family. In terms of assembly, heterotetramer consisting of two non-identical subunits: a beta subunit (TrpG) and a large alpha subunit (TrpE). Requires Mg(2+) as cofactor.

It carries out the reaction chorismate + L-glutamine = anthranilate + pyruvate + L-glutamate + H(+). Its pathway is amino-acid biosynthesis; L-tryptophan biosynthesis; L-tryptophan from chorismate: step 1/5. With respect to regulation, feedback inhibited by tryptophan. Functionally, part of a heterotetrameric complex that catalyzes the two-step biosynthesis of anthranilate, an intermediate in the biosynthesis of L-tryptophan. In the first step, the glutamine-binding beta subunit (TrpG) of anthranilate synthase (AS) provides the glutamine amidotransferase activity which generates ammonia as a substrate that, along with chorismate, is used in the second step, catalyzed by the large alpha subunit of AS (TrpE) to produce anthranilate. In the absence of TrpG, TrpE can synthesize anthranilate directly from chorismate and high concentrations of ammonia. The sequence is that of Anthranilate synthase component 1 (trpE) from Cereibacter sphaeroides (strain ATCC 17023 / DSM 158 / JCM 6121 / CCUG 31486 / LMG 2827 / NBRC 12203 / NCIMB 8253 / ATH 2.4.1.) (Rhodobacter sphaeroides).